The following is an 822-amino-acid chain: Telomere length regulation protein TEL2 homolog (822 aa).

The segment at 442 to 504 (NDDEEEQPDA…ADQEKKKSAP (63 aa)) is disordered. Over residues 465-477 (VSSQSVASDPGNG) the composition is skewed to polar residues. Acidic residues predominate over residues 480–489 (SELDSDDDLT).

This sequence belongs to the TEL2 family.

Its subcellular location is the cytoplasm. It is found in the membrane. The protein localises to the nucleus. Its function is as follows. Regulator of the DNA damage response (DDR). Part of the TTT complex that is required to stabilize protein levels of the phosphatidylinositol 3-kinase-related protein kinase (PIKK) family proteins. Promotes assembly, stabilizes and maintains the activity of TORC complexes, which regulate cell growth and survival in response to nutrient and hormonal signals. May be involved in telomere length regulation. The protein is Telomere length regulation protein TEL2 homolog (telo2) of Danio rerio (Zebrafish).